Here is a 106-residue protein sequence, read N- to C-terminus: Large ribosomal subunit protein eL34 (106 aa).

This sequence belongs to the eukaryotic ribosomal protein eL34 family.

The protein is Large ribosomal subunit protein eL34 of Hyperthermus butylicus (strain DSM 5456 / JCM 9403 / PLM1-5).